The primary structure comprises 366 residues: Ferrochelatase (366 aa).

Residues His-210 and Glu-293 each contribute to the Fe cation site.

The protein belongs to the ferrochelatase family.

The protein localises to the cytoplasm. It catalyses the reaction heme b + 2 H(+) = protoporphyrin IX + Fe(2+). The protein operates within porphyrin-containing compound metabolism; protoheme biosynthesis; protoheme from protoporphyrin-IX: step 1/1. In terms of biological role, catalyzes the ferrous insertion into protoporphyrin IX. In Leptospira borgpetersenii serovar Hardjo-bovis (strain L550), this protein is Ferrochelatase.